Here is a 573-residue protein sequence, read N- to C-terminus: Glutathione/L-cysteine transport system ATP-binding/permease protein CydC (573 aa).

Residues 1 to 15 (MRALLPYLALYKRHK) are Cytoplasmic-facing. Transmembrane regions (helical) follow at residues 16 to 36 (WMLS…IGLL) and 37 to 57 (TLSG…LYSF). The ABC transmembrane type-1 domain maps to 20–306 (LGIVLAIVTL…VTGAFQHLGQ (287 aa)). Topologically, residues 58–136 (NYMLPAAGVR…VDTLDHLYLR (79 aa)) are cytoplasmic. A helical transmembrane segment spans residues 137–157 (VISPLVGAFVVIMVVTIGLSF). At 158–161 (LDFT) the chain is on the periplasmic side. Residues 162–182 (LAFTLGGIMLLTLFLMPPLFY) traverse the membrane as a helical segment. The Cytoplasmic segment spans residues 183 to 249 (RAGKSTGQNL…QSELTALSQA (67 aa)). A helical transmembrane segment spans residues 250 to 270 (IMLLIGALAVILMLWMASGGV). At 271–276 (GGNAQP) the chain is on the periplasmic side. Residues 277–297 (GALIALFVFCALAAFEALAPV) form a helical membrane-spanning segment. Residues 298–573 (TGAFQHLGQV…GRYYQFKQGL (276 aa)) lie on the Cytoplasmic side of the membrane. The ABC transporter domain occupies 339–572 (LTLRDVQFTY…QGRYYQFKQG (234 aa)). 373–380 (GRTGCGKS) is an ATP binding site.

Belongs to the ABC transporter superfamily. Cysteine exporter (TC 3.A.1.129.1) family. In terms of assembly, forms a heterodimer with CydD.

The protein localises to the cell inner membrane. The enzyme catalyses L-cysteine(in) + ATP + H2O = L-cysteine(out) + ADP + phosphate + H(+). The catalysed reaction is glutathione(in) + ATP + H2O = glutathione(out) + ADP + phosphate + H(+). With respect to regulation, ATPase activity is stimulated by various thiol compounds. The presence of heme leads to a further enhancement of thiol-stimulated ATPase activity, although a large excess of heme inhibits activity. Glutathione transport is inhibited by sodium orthovanadate, an inhibitor of ABC-type transport systems, but not by the proton ionophore carbonyl cyanide m-chlorophenylhydrazone (CCCP). Its function is as follows. Part of the ABC transporter complex CydDC that exports the reduced low-molecular-weight thiols cysteine and glutathione to the periplasm. Export of these thiol-containing redox-active molecules may be crucial for redox homeostasis in the periplasm, permitting correct assembly of various respiratory complexes and formation of correct disulfide bonds in periplasmic and secreted proteins. CydC contains transmembrane domains (TMD), which form a pore in the inner membrane, and an ATP-binding domain (NBD), which is responsible for energy generation. Required for the assembly of functional cytochrome bd-type quinol oxidases and periplasmic c-type cytochromes. Overexpression of CydDC under anaerobic conditions also results in the formation of a heme biosynthesis-derived pigment, P-574. CydDC binds heme b, but heme is probably not transported by the complex and instead has a role in regulating ATPase activity. Functionally, conversely, a more recent study suggests an alternative function of CydDC: authors suggest that CydDC does not mediate the export of L-cysteine but rather reduces cytoplasmic L-cystine to L-cysteine. The principle function of CydDC would be to maintain the reduced state of cytoplasmic L-cysteine, thereby providing an important connection between sulfur metabolism, oxidative stress and resistance to antibiotics. The polypeptide is Glutathione/L-cysteine transport system ATP-binding/permease protein CydC (Escherichia coli (strain K12)).